A 243-amino-acid chain; its full sequence is Probable transcriptional regulatory protein BAPKO_0024/BafPKo_0025 (243 aa).

Belongs to the TACO1 family.

Its subcellular location is the cytoplasm. The polypeptide is Probable transcriptional regulatory protein BAPKO_0024/BafPKo_0025 (Borreliella afzelii (strain PKo) (Borrelia afzelii)).